We begin with the raw amino-acid sequence, 196 residues long: [1-hydroxy-2-(trimethylamino)ethyl]phosphonate dioxygenase (glycine-betaine-forming) (196 aa).

Tyr30 is a [(1R)-1-hydroxy-2-(trimethylamino)ethyl]phosphonate binding site. Fe cation is bound by residues Tyr30, His40, His64, and Asp65. In terms of domain architecture, HD spans 37-156 (MAEHMLQGAT…VAEFEKNPNL (120 aa)). Positions 68, 86, 109, 113, 131, 134, and 163 each coordinate [(1R)-1-hydroxy-2-(trimethylamino)ethyl]phosphonate. 2 residues coordinate Fe cation: His86 and His109. Asp166 is a Fe cation binding site.

Requires Fe cation as cofactor.

It carries out the reaction [(1R)-1-hydroxy-2-(trimethylamino)ethyl]phosphonate + O2 = glycine betaine + phosphate + 2 H(+). In terms of biological role, involved in the degradation of the naturally occurring organophosphonate 2-(trimethylammonio)ethylphosphonate (TMAEP). Catalyzes the O(2)-dependent cleavage of (R)-1-hydroxy-2-(trimethylammonio)ethylphosphonate (OH-TMAEP) to yield glycine betaine and phosphate. Is highly specific for its N-trimethylated substrate. This chain is [1-hydroxy-2-(trimethylamino)ethyl]phosphonate dioxygenase (glycine-betaine-forming), found in Leisingera caerulea (Phaeobacter caeruleus).